The chain runs to 43 residues: Protein PsbN (43 aa).

A helical membrane pass occupies residues 7-27 (ITIFLSCFLVGVTGYALYTAF).

It belongs to the PsbN family.

The protein resides in the plastid. The protein localises to the chloroplast thylakoid membrane. Functionally, may play a role in photosystem I and II biogenesis. This Klebsormidium bilatum (Filamentous green alga) protein is Protein PsbN.